The chain runs to 294 residues: ATP synthase gamma chain (294 aa).

It belongs to the ATPase gamma chain family. F-type ATPases have 2 components, CF(1) - the catalytic core - and CF(0) - the membrane proton channel. CF(1) has five subunits: alpha(3), beta(3), gamma(1), delta(1), epsilon(1). CF(0) has three main subunits: a, b and c.

It is found in the cell inner membrane. Its function is as follows. Produces ATP from ADP in the presence of a proton gradient across the membrane. The gamma chain is believed to be important in regulating ATPase activity and the flow of protons through the CF(0) complex. The polypeptide is ATP synthase gamma chain (Rhizobium rhizogenes (strain K84 / ATCC BAA-868) (Agrobacterium radiobacter)).